The following is a 581-amino-acid chain: La-related protein 7 (581 aa).

The residue at position 1 (Met1) is an N-acetylmethionine. Over residues 1-10 (METESGNQKN) the composition is skewed to polar residues. Disordered regions lie at residues 1–28 (METE…KKKR), 188–368 (NPPE…ERHK), and 410–440 (KSES…CPTQ). The HTH La-type RNA-binding domain maps to 28 to 122 (RSRVKQVLAD…KPLGERPKDE (95 aa)). The region spanning 125–203 (RTVYVELLPK…PRKPGIFPKT (79 aa)) is the RRM domain. Residues 219-228 (KKKKKKKGRM) are compositionally biased toward basic residues. Residues 229–240 (KKEDNVQAKEEN) are compositionally biased toward basic and acidic residues. Lys237 participates in a covalent cross-link: Glycyl lysine isopeptide (Lys-Gly) (interchain with G-Cter in SUMO2). At Thr257 the chain carries Phosphothreonine. 6 positions are modified to phosphoserine: Ser258, Ser261, Ser273, Ser298, Ser299, and Ser300. The span at 316-335 (IQKDIIKEPSEASKENRDIE) shows a compositional bias: basic and acidic residues. At Ser337 the chain carries Phosphoserine. The residue at position 338 (Thr338) is a Phosphothreonine. Residue Ser351 is modified to Phosphoserine. Over residues 354–367 (KTKRKHKKKHKERH) the composition is skewed to basic residues. Lys410 participates in a covalent cross-link: Glycyl lysine isopeptide (Lys-Gly) (interchain with G-Cter in SUMO2). A xRRM domain is found at 449–562 (QFVSGVIVKI…TEKLITKAEK (114 aa)).

It belongs to the LARP7 family. In terms of assembly, core component of the 7SK RNP complex, at least composed of 7SK RNA, LARP7, MEPCE, HEXIM1 (or HEXIM2) and P-TEFb (composed of CDK9 and CCNT1/cyclin-T1). Interacts with METTL16. Interacts with RBM7; upon genotoxic stress this interaction is enhanced, triggering the release of inactive P-TEFb complex from the core, yielding to P-TEFb complex activation. Associates with box C/D small nucleolar ribonucleoprotein (snoRNP) complexes.

It is found in the nucleus. It localises to the nucleoplasm. Functionally, RNA-binding protein that specifically binds distinct small nuclear RNA (snRNAs) and regulates their processing and function. Specifically binds the 7SK snRNA (7SK RNA) and acts as a core component of the 7SK ribonucleoprotein (RNP) complex, thereby acting as a negative regulator of transcription elongation by RNA polymerase II. The 7SK RNP complex sequesters the positive transcription elongation factor b (P-TEFb) in a large inactive 7SK RNP complex preventing RNA polymerase II phosphorylation and subsequent transcriptional elongation. The 7SK RNP complex also promotes snRNA gene transcription by RNA polymerase II via interaction with the little elongation complex (LEC). LARP7 specifically binds to the highly conserved 3'-terminal U-rich stretch of 7SK RNA; on stimulation, remains associated with 7SK RNA, whereas P-TEFb is released from the complex. LARP7 also acts as a regulator of mRNA splicing fidelity by promoting U6 snRNA processing. Specifically binds U6 snRNAs and associates with a subset of box C/D RNP complexes: promotes U6 snRNA 2'-O-methylation by facilitating U6 snRNA loading into box C/D RNP complexes. U6 snRNA 2'-O-methylation is required for mRNA splicing fidelity. Binds U6 snRNAs with a 5'-CAGGG-3' sequence motif. U6 snRNA processing is required for spermatogenesis. This chain is La-related protein 7, found in Macaca fascicularis (Crab-eating macaque).